Here is a 742-residue protein sequence, read N- to C-terminus: Envelope glycoprotein H (742 aa).

Positions 1–29 (MRPGLPSYLIVLAVCLLSHLLSSRYGAEA) are cleaved as a signal peptide. Over 30-719 (ISEPLDKAFH…VVDATDSRLL (690 aa)) the chain is Virion surface. Residues Asn55, Asn62, Asn67, and Asn192 are each glycosylated (N-linked (GlcNAc...) asparagine; by host). The interaction with gL stretch occupies residues 217–280 (YLIDELRYVK…QTEKHELLVL (64 aa)). N-linked (GlcNAc...) asparagine; by host glycans are attached at residues Asn641 and Asn700. Residues 720–740 (MMSVYALSAIIGIYLLYRMLK) traverse the membrane as a helical segment. Residues 741–742 (TC) are Intravirion-facing.

This sequence belongs to the herpesviridae glycoprotein H family. In terms of assembly, interacts with glycoprotein L (gL); this interaction is necessary for the correct processing and cell surface expression of gH. The heterodimer gH/gL seems to interact with gB trimers during fusion. Forms the envelope pentamer complex (PC) composed of gH, gL, UL128, UL130, and UL131A. The pentamer interacts with host NRP2. Forms the envelope trimer complex composed of gH, gL, and gO. The trimer interacts with host PDGFRA. The trimer also interacts with host EPHA2. Post-translationally, N-glycosylated, O-glycosylated, and sialylated.

It localises to the virion membrane. Its subcellular location is the host cell membrane. The protein localises to the host endosome membrane. Functionally, the heterodimer glycoprotein H-glycoprotein L is required for the fusion of viral and plasma membranes leading to virus entry into the host cell. Following initial binding to host receptor, membrane fusion is mediated by the fusion machinery composed of gB and the heterodimer gH/gL. May also be involved in the fusion between the virion envelope and the outer nuclear membrane during virion morphogenesis. In human cytomegalovirus, forms two distincts complexes to mediate viral entry, a trimer and a pentamer at the surface of the virion envelope. The gH-gL-gO trimer is required for infection in fibroblasts by interacting with host PDGFRA, and in glioblastoma cells by interacting with host EPHA2. The gH-gL-UL128-UL130-UL131A pentamer is essential for viral entry in epithelial, endothelial and myeloid cells via interaction with host NRP2. This Human cytomegalovirus (strain Towne) (HHV-5) protein is Envelope glycoprotein H.